A 192-amino-acid chain; its full sequence is Small ribosomal subunit protein uS4B (192 aa).

Phosphoserine is present on residues Ser-89 and Ser-179. Residues 107–181 enclose the S4 RNA-binding domain; it reads RRLQTQVFKL…CKRKRLRSQQ (75 aa). The tract at residues 166 to 192 is disordered; it reads GGRPGRCKRKRLRSQQEGGEGEEAEEE.

Belongs to the universal ribosomal protein uS4 family. Component of the small ribosomal subunit (SSU). Mature yeast ribosomes consist of a small (40S) and a large (60S) subunit. The 40S small subunit contains 1 molecule of ribosomal RNA (18S rRNA) and at least 33 different proteins. The large 60S subunit contains 3 rRNA molecules (25S, 5.8S and 5S rRNA) and at least 46 different proteins. Interacts with snoRNA U3. uS11 interacts with MPP10. Component of the ribosomal small subunit (SSU) processome composed of at least 40 protein subunits and snoRNA U3.

It localises to the cytoplasm. In terms of biological role, component of the ribosome, a large ribonucleoprotein complex responsible for the synthesis of proteins in the cell. The small ribosomal subunit (SSU) binds messenger RNAs (mRNAs) and translates the encoded message by selecting cognate aminoacyl-transfer RNA (tRNA) molecules. The large subunit (LSU) contains the ribosomal catalytic site termed the peptidyl transferase center (PTC), which catalyzes the formation of peptide bonds, thereby polymerizing the amino acids delivered by tRNAs into a polypeptide chain. The nascent polypeptides leave the ribosome through a tunnel in the LSU and interact with protein factors that function in enzymatic processing, targeting, and the membrane insertion of nascent chains at the exit of the ribosomal tunnel. uS4 is involved in nucleolar processing of pre-18S ribosomal RNA and ribosome assembly. In Schizosaccharomyces pombe (strain 972 / ATCC 24843) (Fission yeast), this protein is Small ribosomal subunit protein uS4B (rps902).